The chain runs to 208 residues: Large ribosomal subunit protein uL3 (208 aa).

A disordered region spans residues 116–146 (GFQGAIKRHGQSRGPMAHGSRYHRRPGSMGP).

The protein belongs to the universal ribosomal protein uL3 family. Part of the 50S ribosomal subunit. Forms a cluster with proteins L14 and L19.

Functionally, one of the primary rRNA binding proteins, it binds directly near the 3'-end of the 23S rRNA, where it nucleates assembly of the 50S subunit. This is Large ribosomal subunit protein uL3 from Streptococcus mutans serotype c (strain ATCC 700610 / UA159).